We begin with the raw amino-acid sequence, 261 residues long: Glucosamine-6-phosphate deaminase (261 aa).

The Proton acceptor; for enolization step role is filled by D67. D136 serves as the catalytic For ring-opening step. H138 functions as the Proton acceptor; for ring-opening step in the catalytic mechanism. The active-site For ring-opening step is the E143.

This sequence belongs to the glucosamine/galactosamine-6-phosphate isomerase family. NagB subfamily.

The enzyme catalyses alpha-D-glucosamine 6-phosphate + H2O = beta-D-fructose 6-phosphate + NH4(+). It functions in the pathway amino-sugar metabolism; N-acetylneuraminate degradation; D-fructose 6-phosphate from N-acetylneuraminate: step 5/5. In terms of biological role, catalyzes the reversible isomerization-deamination of glucosamine 6-phosphate (GlcN6P) to form fructose 6-phosphate (Fru6P) and ammonium ion. The protein is Glucosamine-6-phosphate deaminase of Streptomyces coelicolor (strain ATCC BAA-471 / A3(2) / M145).